The following is a 493-amino-acid chain: Glutamyl-tRNA(Gln) amidotransferase subunit A (493 aa).

Residues lysine 78 and serine 158 each act as charge relay system in the active site. Residue serine 182 is the Acyl-ester intermediate of the active site.

Belongs to the amidase family. GatA subfamily. As to quaternary structure, heterotrimer of A, B and C subunits.

The catalysed reaction is L-glutamyl-tRNA(Gln) + L-glutamine + ATP + H2O = L-glutaminyl-tRNA(Gln) + L-glutamate + ADP + phosphate + H(+). Allows the formation of correctly charged Gln-tRNA(Gln) through the transamidation of misacylated Glu-tRNA(Gln) in organisms which lack glutaminyl-tRNA synthetase. The reaction takes place in the presence of glutamine and ATP through an activated gamma-phospho-Glu-tRNA(Gln). This chain is Glutamyl-tRNA(Gln) amidotransferase subunit A, found in Rickettsia conorii (strain ATCC VR-613 / Malish 7).